Consider the following 96-residue polypeptide: (4S)-4-hydroxy-5-phosphonooxypentane-2,3-dione isomerase (96 aa).

An ABM domain is found at His2–Phe91.

The protein belongs to the LsrG family. Homodimer.

It localises to the cytoplasm. It catalyses the reaction (2S)-2-hydroxy-3,4-dioxopentyl phosphate = 3-hydroxy-2,4-dioxopentyl phosphate. Involved in the degradation of phospho-AI-2, thereby terminating induction of the lsr operon and closing the AI-2 signaling cycle. Catalyzes the conversion of (4S)-4-hydroxy-5-phosphonooxypentane-2,3-dione (P-DPD) to 3-hydroxy-5-phosphonooxypentane-2,4-dione (P-HPD). The sequence is that of (4S)-4-hydroxy-5-phosphonooxypentane-2,3-dione isomerase from Escherichia coli O157:H7.